We begin with the raw amino-acid sequence, 718 residues long: Protein Hook homolog 1 (718 aa).

Residues 8-124 (PLLCDSLILW…RLMQLILGCA (117 aa)) enclose the Calponin-homology (CH) domain. Coiled-coil stretches lie at residues 164–428 (SASD…ELRY) and 473–652 (LLLQ…AKLR).

It belongs to the hook family. In terms of assembly, interacts with microtubules.

It localises to the cytoplasm. The protein localises to the cytoskeleton. May function to promote vesicle trafficking and/or fusion. The polypeptide is Protein Hook homolog 1 (HOOK1) (Gallus gallus (Chicken)).